Reading from the N-terminus, the 149-residue chain is Calmodulin-1 (149 aa).

Position 2 is an N-acetylalanine (alanine 2). 4 EF-hand domains span residues 8–43, 44–79, 81–116, and 117–149; these read EQIA…LGQN, PTEA…KMKD, DSEE…LGEK, and LTDE…MTSK. Residues aspartate 21, aspartate 23, aspartate 25, threonine 27, glutamate 32, aspartate 57, aspartate 59, asparagine 61, threonine 63, glutamate 68, aspartate 94, aspartate 96, asparagine 98, and glutamate 105 each contribute to the Ca(2+) site. Residue lysine 116 is modified to N6,N6,N6-trimethyllysine. Ca(2+)-binding residues include aspartate 130, aspartate 132, aspartate 134, glutamine 136, and glutamate 141.

The protein belongs to the calmodulin family.

Its function is as follows. Calmodulin mediates the control of a large number of enzymes, ion channels and other proteins by Ca(2+). Among the enzymes to be stimulated by the calmodulin-Ca(2+) complex are a number of protein kinases and phosphatases. This Branchiostoma floridae (Florida lancelet) protein is Calmodulin-1.